The sequence spans 339 residues: Phenylalanine--tRNA ligase alpha subunit (339 aa).

Glutamate 254 contributes to the Mg(2+) binding site.

The protein belongs to the class-II aminoacyl-tRNA synthetase family. Phe-tRNA synthetase alpha subunit type 1 subfamily. Tetramer of two alpha and two beta subunits. Mg(2+) is required as a cofactor.

It localises to the cytoplasm. The catalysed reaction is tRNA(Phe) + L-phenylalanine + ATP = L-phenylalanyl-tRNA(Phe) + AMP + diphosphate + H(+). This is Phenylalanine--tRNA ligase alpha subunit from Desulforudis audaxviator (strain MP104C).